The following is an 81-amino-acid chain: Large ribosomal subunit protein bL31B (81 aa).

Belongs to the bacterial ribosomal protein bL31 family. Type B subfamily. Part of the 50S ribosomal subunit.

This is Large ribosomal subunit protein bL31B from Limosilactobacillus reuteri (strain DSM 20016) (Lactobacillus reuteri).